A 3061-amino-acid polypeptide reads, in one-letter code: Genome polyprotein (3061 aa).

The 144-residue stretch at 141 to 284 folds into the Peptidase S30 domain; it reads KLTEGQMNHL…QGVMDSMVQF (144 aa). Residues His192, Asp201, and Ser235 each act as for P1 proteinase activity in the active site. The Involved in interaction with stylet and aphid transmission signature appears at 334–337; the sequence is KITC. Positions 592 to 594 match the Involved in virions binding and aphid transmission motif; sequence PTK. The Peptidase C6 domain occupies 618 to 740; that stretch reads LYIARQGFCY…ESDIKHYRVG (123 aa). Active-site for helper component proteinase activity residues include Cys626 and His699. A Helicase ATP-binding domain is found at 1229 to 1381; it reads DIAHSEHLDF…TQQPVKLIVE (153 aa). Position 1242–1249 (1242–1249) interacts with ATP; the sequence is GAVGSGKS. A DECH box motif is present at residues 1331–1334; sequence DECH. In terms of domain architecture, Helicase C-terminal spans 1400 to 1559; that stretch reads DVVQFGSNVL…NLPVMTGGVS (160 aa). The Nuclear localization signal signature appears at 1884–1892; the sequence is RKKGKGKGT. Tyr1907 bears the O-(5'-phospho-RNA)-tyrosine mark. In terms of domain architecture, Peptidase C4 spans 2032 to 2250; that stretch reads AKSLMRGLRD…VLWGPLKLKE (219 aa). Active-site for nuclear inclusion protein A activity residues include His2077, Asp2112, and Cys2182. The 125-residue stretch at 2517–2641 folds into the RdRp catalytic domain; it reads WVYCDADGSQ…AVNPEKESIL (125 aa). The segment at 2795–2835 is disordered; sequence GNDTIDAGGSTKKDAKQEQGSIQPNLNKEKEKDVNVGTSGT. Thr3044 is subject to Phosphothreonine.

Belongs to the potyviridae genome polyprotein family. As to quaternary structure, interacts with host eIF4E protein (via cap-binding region); this interaction mediates the translation of the VPg-viral RNA conjugates. Part of a complex that comprises VPg, RNA, host EIF4E and EIF4G; this interaction mediates the translation of the VPg-viral RNA conjugates. VPg is uridylylated by the polymerase and is covalently attached to the 5'-end of the genomic RNA. This uridylylated form acts as a nucleotide-peptide primer for the polymerase. Post-translationally, potyviral RNA is expressed as two polyproteins which undergo post-translational proteolytic processing. Genome polyprotein is processed by NIa-pro, P1 and HC-pro proteinases resulting in the production of at least ten individual proteins. P3N-PIPO polyprotein is cleaved by P1 and HC-pro proteinases resulting in the production of three individual proteins. The P1 proteinase and the HC-pro cleave only their respective C-termini autocatalytically. 6K1 is essential for proper proteolytic separation of P3 from CI.

The protein localises to the host cytoplasmic vesicle. The protein resides in the host nucleus. It is found in the virion. It carries out the reaction RNA(n) + a ribonucleoside 5'-triphosphate = RNA(n+1) + diphosphate. The catalysed reaction is Hydrolyzes glutaminyl bonds, and activity is further restricted by preferences for the amino acids in P6 - P1' that vary with the species of potyvirus, e.g. Glu-Xaa-Xaa-Tyr-Xaa-Gln-|-(Ser or Gly) for the enzyme from tobacco etch virus. The natural substrate is the viral polyprotein, but other proteins and oligopeptides containing the appropriate consensus sequence are also cleaved.. The enzyme catalyses Hydrolyzes a Gly-|-Gly bond at its own C-terminus, commonly in the sequence -Tyr-Xaa-Val-Gly-|-Gly, in the processing of the potyviral polyprotein.. Its function is as follows. Required for aphid transmission and also has proteolytic activity. Only cleaves a Gly-Gly dipeptide at its own C-terminus. Interacts with virions and aphid stylets. Acts as a suppressor of RNA-mediated gene silencing, also known as post-transcriptional gene silencing (PTGS), a mechanism of plant viral defense that limits the accumulation of viral RNAs. May have RNA-binding activity. Has helicase activity. It may be involved in replication. In terms of biological role, indispensable for virus replication. Reduces the abundance of host transcripts related to jasmonic acid biosynthesis therefore altering the host defenses. In order to increase its own stability, decreases host protein degradation pathways. Functionally, indispensable for virus replication. Its function is as follows. Mediates the cap-independent, EIF4E-dependent translation of viral genomic RNAs. Binds to the cap-binding site of host EIF4E and thus interferes with the host EIF4E-dependent mRNA export and translation. VPg-RNA directly binds EIF4E and is a template for transcription. Also forms trimeric complexes with EIF4E-EIF4G, which are templates for translation. Has RNA-binding and proteolytic activities. In terms of biological role, an RNA-dependent RNA polymerase that plays an essential role in the virus replication. Functionally, involved in aphid transmission, cell-to-cell and systemis movement, encapsidation of the viral RNA and in the regulation of viral RNA amplification. The polypeptide is Genome polyprotein (Potato virus Y (strain Hungarian) (PVY)).